The sequence spans 196 residues: Alpha-crystallin A chain (196 aa).

Met1 is modified (N-acetylmethionine). The required for complex formation with BFSP1 and BFSP2 stretch occupies residues 1-63; that stretch reads MDVTIQHPWF…RTVLDSGISE (63 aa). Gln6 is subject to Deamidated glutamine; partial. The residue at position 45 (Ser45) is a Phosphoserine. Gln50 is subject to Deamidated glutamine; partial. A sHSP domain is found at 76–185; that stretch reads HAGNPKNNPI…GHSERAIPVS (110 aa). An N6-acetyllysine mark is found at Lys93 and Lys122. His123 is a binding site for Zn(2+). The residue at position 124 (Asn124) is a Deamidated asparagine; partial. Residues Glu125 and His130 each coordinate Zn(2+). Position 145 is a phosphoserine (Ser145). The residue at position 146 (Asn146) is a Deamidated asparagine; partial. The interval 168–196 is disordered; that stretch reads KVQSGLDAGHSERAIPVSREEKPSSAPSS. Residue Gln170 is modified to Deamidated glutamine; partial. Positions 176–190 are enriched in basic and acidic residues; sequence GHSERAIPVSREEKP. His177 contributes to the Zn(2+) binding site. Ser185 is a glycosylation site (O-linked (GlcNAc) serine).

This sequence belongs to the small heat shock protein (HSP20) family. Heteromer composed of three CRYAA and one CRYAB subunits. Inter-subunit bridging via zinc ions enhances stability, which is crucial as there is no protein turn over in the lens. Can also form homodimers and homotetramers (dimers of dimers) which serve as the building blocks of homooligomers. Within homooligomers, the zinc-binding motif is created from residues of 3 different molecules. His-123 and Glu-125 from one molecule are ligands of the zinc ion, and His-130 and His-177 residues from additional molecules complete the site with tetrahedral coordination geometry. Part of a complex required for lens intermediate filament formation composed of BFSP1, BFSP2 and CRYAA. In terms of processing, acetylation at Lys-93 may increase chaperone activity. Post-translationally, undergoes age-dependent proteolytical cleavage at the C-terminus.

The protein localises to the cytoplasm. The protein resides in the nucleus. Its function is as follows. Contributes to the transparency and refractive index of the lens. Acts as a chaperone, preventing aggregation of various proteins under a wide range of stress conditions. Required for the correct formation of lens intermediate filaments as part of a complex composed of BFSP1, BFSP2 and CRYAA. This is Alpha-crystallin A chain (CRYAA) from Mesocricetus auratus (Golden hamster).